Here is a 191-residue protein sequence, read N- to C-terminus: Fe/S biogenesis protein NfuA (191 aa).

[4Fe-4S] cluster is bound by residues Cys-149 and Cys-152.

It belongs to the NfuA family. In terms of assembly, homodimer. It depends on [4Fe-4S] cluster as a cofactor.

Its function is as follows. Involved in iron-sulfur cluster biogenesis. Binds a 4Fe-4S cluster, can transfer this cluster to apoproteins, and thereby intervenes in the maturation of Fe/S proteins. Could also act as a scaffold/chaperone for damaged Fe/S proteins. In Yersinia pseudotuberculosis serotype O:1b (strain IP 31758), this protein is Fe/S biogenesis protein NfuA.